A 444-amino-acid chain; its full sequence is Phosphoglucosamine mutase (444 aa).

Ser103 acts as the Phosphoserine intermediate in catalysis. Mg(2+)-binding residues include Ser103, Asp242, Asp244, and Asp246. Position 103 is a phosphoserine (Ser103).

This sequence belongs to the phosphohexose mutase family. Requires Mg(2+) as cofactor. Activated by phosphorylation.

The catalysed reaction is alpha-D-glucosamine 1-phosphate = D-glucosamine 6-phosphate. Its function is as follows. Catalyzes the conversion of glucosamine-6-phosphate to glucosamine-1-phosphate. The polypeptide is Phosphoglucosamine mutase (Hydrogenovibrio crunogenus (strain DSM 25203 / XCL-2) (Thiomicrospira crunogena)).